The chain runs to 309 residues: Aspartate carbamoyltransferase catalytic subunit (309 aa).

Carbamoyl phosphate is bound by residues arginine 58 and threonine 59. Lysine 86 serves as a coordination point for L-aspartate. Carbamoyl phosphate is bound by residues arginine 108, histidine 136, and glutamine 139. 2 residues coordinate L-aspartate: arginine 170 and arginine 224. Carbamoyl phosphate contacts are provided by glycine 266 and proline 267.

It belongs to the aspartate/ornithine carbamoyltransferase superfamily. ATCase family. As to quaternary structure, heterododecamer (2C3:3R2) of six catalytic PyrB chains organized as two trimers (C3), and six regulatory PyrI chains organized as three dimers (R2).

The catalysed reaction is carbamoyl phosphate + L-aspartate = N-carbamoyl-L-aspartate + phosphate + H(+). The protein operates within pyrimidine metabolism; UMP biosynthesis via de novo pathway; (S)-dihydroorotate from bicarbonate: step 2/3. Its function is as follows. Catalyzes the condensation of carbamoyl phosphate and aspartate to form carbamoyl aspartate and inorganic phosphate, the committed step in the de novo pyrimidine nucleotide biosynthesis pathway. The protein is Aspartate carbamoyltransferase catalytic subunit of Campylobacter concisus (strain 13826).